The sequence spans 311 residues: Acetyl-coenzyme A carboxylase carboxyl transferase subunit alpha (311 aa).

Positions 32 to 289 constitute a CoA carboxyltransferase C-terminal domain; the sequence is ELNLLEERLR…KSVLEQKLAQ (258 aa).

Belongs to the AccA family. As to quaternary structure, acetyl-CoA carboxylase is a heterohexamer composed of biotin carboxyl carrier protein (AccB), biotin carboxylase (AccC) and two subunits each of ACCase subunit alpha (AccA) and ACCase subunit beta (AccD).

It localises to the cytoplasm. It catalyses the reaction N(6)-carboxybiotinyl-L-lysyl-[protein] + acetyl-CoA = N(6)-biotinyl-L-lysyl-[protein] + malonyl-CoA. Its pathway is lipid metabolism; malonyl-CoA biosynthesis; malonyl-CoA from acetyl-CoA: step 1/1. Its function is as follows. Component of the acetyl coenzyme A carboxylase (ACC) complex. First, biotin carboxylase catalyzes the carboxylation of biotin on its carrier protein (BCCP) and then the CO(2) group is transferred by the carboxyltransferase to acetyl-CoA to form malonyl-CoA. In Exiguobacterium sibiricum (strain DSM 17290 / CCUG 55495 / CIP 109462 / JCM 13490 / 255-15), this protein is Acetyl-coenzyme A carboxylase carboxyl transferase subunit alpha.